A 184-amino-acid chain; its full sequence is Crossover junction endodeoxyribonuclease RuvC (184 aa).

Catalysis depends on residues Asp-11, Glu-73, and Asp-147. Positions 11, 73, and 147 each coordinate Mg(2+).

It belongs to the RuvC family. As to quaternary structure, homodimer which binds Holliday junction (HJ) DNA. The HJ becomes 2-fold symmetrical on binding to RuvC with unstacked arms; it has a different conformation from HJ DNA in complex with RuvA. In the full resolvosome a probable DNA-RuvA(4)-RuvB(12)-RuvC(2) complex forms which resolves the HJ. The cofactor is Mg(2+).

It is found in the cytoplasm. The enzyme catalyses Endonucleolytic cleavage at a junction such as a reciprocal single-stranded crossover between two homologous DNA duplexes (Holliday junction).. Functionally, the RuvA-RuvB-RuvC complex processes Holliday junction (HJ) DNA during genetic recombination and DNA repair. Endonuclease that resolves HJ intermediates. Cleaves cruciform DNA by making single-stranded nicks across the HJ at symmetrical positions within the homologous arms, yielding a 5'-phosphate and a 3'-hydroxyl group; requires a central core of homology in the junction. The consensus cleavage sequence is 5'-(A/T)TT(C/G)-3'. Cleavage occurs on the 3'-side of the TT dinucleotide at the point of strand exchange. HJ branch migration catalyzed by RuvA-RuvB allows RuvC to scan DNA until it finds its consensus sequence, where it cleaves and resolves the cruciform DNA. The sequence is that of Crossover junction endodeoxyribonuclease RuvC from Neisseria gonorrhoeae (strain ATCC 700825 / FA 1090).